Reading from the N-terminus, the 425-residue chain is Serine--tRNA ligase (425 aa).

A disordered region spans residues 110–134; the sequence is NLPSADAPEGKSEADNVEVKRWGEP. The segment covering 117–134 has biased composition (basic and acidic residues); it reads PEGKSEADNVEVKRWGEP. 233–235 is an L-serine binding site; it reads TAE. 264–266 is a binding site for ATP; it reads RRE. Residue Glu-287 coordinates L-serine. 351–354 is a binding site for ATP; that stretch reads EISS. Ser-385 serves as a coordination point for L-serine.

This sequence belongs to the class-II aminoacyl-tRNA synthetase family. Type-1 seryl-tRNA synthetase subfamily. As to quaternary structure, homodimer. The tRNA molecule binds across the dimer.

The protein resides in the cytoplasm. It carries out the reaction tRNA(Ser) + L-serine + ATP = L-seryl-tRNA(Ser) + AMP + diphosphate + H(+). It catalyses the reaction tRNA(Sec) + L-serine + ATP = L-seryl-tRNA(Sec) + AMP + diphosphate + H(+). It participates in aminoacyl-tRNA biosynthesis; selenocysteinyl-tRNA(Sec) biosynthesis; L-seryl-tRNA(Sec) from L-serine and tRNA(Sec): step 1/1. Functionally, catalyzes the attachment of serine to tRNA(Ser). Is also able to aminoacylate tRNA(Sec) with serine, to form the misacylated tRNA L-seryl-tRNA(Sec), which will be further converted into selenocysteinyl-tRNA(Sec). This is Serine--tRNA ligase from Synechococcus sp. (strain RCC307).